The sequence spans 151 residues: uncharacterized protein (151 aa).

This sequence to equivalent protein in phage 82.

This is an uncharacterized protein from Escherichia coli (strain K12).